Reading from the N-terminus, the 337-residue chain is Glycerol-3-phosphate dehydrogenase [NAD(P)+] (337 aa).

NADPH contacts are provided by serine 11, tryptophan 12, arginine 32, and lysine 109. Sn-glycerol 3-phosphate contacts are provided by lysine 109, glycine 140, and serine 142. Position 144 (alanine 144) interacts with NADPH. Sn-glycerol 3-phosphate is bound by residues lysine 195, aspartate 248, serine 258, arginine 259, and asparagine 260. Catalysis depends on lysine 195, which acts as the Proton acceptor. Arginine 259 contacts NADPH. Positions 283 and 285 each coordinate NADPH.

This sequence belongs to the NAD-dependent glycerol-3-phosphate dehydrogenase family.

The protein resides in the cytoplasm. It carries out the reaction sn-glycerol 3-phosphate + NAD(+) = dihydroxyacetone phosphate + NADH + H(+). The catalysed reaction is sn-glycerol 3-phosphate + NADP(+) = dihydroxyacetone phosphate + NADPH + H(+). The protein operates within membrane lipid metabolism; glycerophospholipid metabolism. In terms of biological role, catalyzes the reduction of the glycolytic intermediate dihydroxyacetone phosphate (DHAP) to sn-glycerol 3-phosphate (G3P), the key precursor for phospholipid synthesis. In Limosilactobacillus fermentum (strain NBRC 3956 / LMG 18251) (Lactobacillus fermentum), this protein is Glycerol-3-phosphate dehydrogenase [NAD(P)+].